The following is a 345-amino-acid chain: Glycerol-3-phosphate dehydrogenase [NAD(P)+] (345 aa).

Residues serine 11, tryptophan 12, histidine 32, arginine 33, and lysine 106 each contribute to the NADPH site. The sn-glycerol 3-phosphate site is built by lysine 106, glycine 137, and serine 139. Alanine 141 contacts NADPH. Sn-glycerol 3-phosphate-binding residues include lysine 192, aspartate 245, serine 255, arginine 256, and asparagine 257. Lysine 192 (proton acceptor) is an active-site residue. Residue arginine 256 coordinates NADPH. The NADPH site is built by valine 280 and glutamate 282.

It belongs to the NAD-dependent glycerol-3-phosphate dehydrogenase family.

It localises to the cytoplasm. It catalyses the reaction sn-glycerol 3-phosphate + NAD(+) = dihydroxyacetone phosphate + NADH + H(+). The catalysed reaction is sn-glycerol 3-phosphate + NADP(+) = dihydroxyacetone phosphate + NADPH + H(+). It functions in the pathway membrane lipid metabolism; glycerophospholipid metabolism. Catalyzes the reduction of the glycolytic intermediate dihydroxyacetone phosphate (DHAP) to sn-glycerol 3-phosphate (G3P), the key precursor for phospholipid synthesis. In Bacillus pumilus (strain SAFR-032), this protein is Glycerol-3-phosphate dehydrogenase [NAD(P)+].